The primary structure comprises 513 residues: Glycerol-3-phosphate dehydrogenase (513 aa).

16-44 (DVAVIGGGINGVGIAADAAGRGLSVFLCE) contributes to the FAD binding site.

The protein belongs to the FAD-dependent glycerol-3-phosphate dehydrogenase family. FAD is required as a cofactor.

The protein resides in the cytoplasm. It carries out the reaction a quinone + sn-glycerol 3-phosphate = dihydroxyacetone phosphate + a quinol. The chain is Glycerol-3-phosphate dehydrogenase (glpD) from Pseudomonas tolaasii.